The chain runs to 355 residues: Homeobox protein knotted-1-like 12 (355 aa).

2 disordered regions span residues 52-82 (AAGP…GGGE) and 207-233 (ECVG…PRAE). Residues 60–75 (GHGHPHHGGGHHHSKH) show a composition bias toward basic residues. Residues 218–233 (PSGRENEPPEIDPRAE) show a composition bias toward basic and acidic residues. One can recognise an ELK domain in the interval 236–256 (ELKFQLLKKYSGYLSSLRQEF). Residues 257-320 (SKKKKKGKLP…NQRKRHWKPS (64 aa)) constitute a DNA-binding region (homeobox; TALE-type).

It belongs to the TALE/KNOX homeobox family. Expressed in stems, rachis and inflorescence.

It localises to the nucleus. In terms of biological role, probable transcription factor that may be involved in shoot formation during embryogenesis. This is Homeobox protein knotted-1-like 12 (OSH15) from Oryza sativa subsp. japonica (Rice).